The primary structure comprises 330 residues: GMP reductase (330 aa).

Residue Cys180 is the Thioimidate intermediate of the active site. 209–232 contributes to the NADP(+) binding site; it reads LIADGGIRHNGDIAKSVRFGASMV.

It belongs to the IMPDH/GMPR family. GuaC type 2 subfamily.

It carries out the reaction IMP + NH4(+) + NADP(+) = GMP + NADPH + 2 H(+). Its function is as follows. Catalyzes the irreversible NADPH-dependent deamination of GMP to IMP. It functions in the conversion of nucleobase, nucleoside and nucleotide derivatives of G to A nucleotides, and in maintaining the intracellular balance of A and G nucleotides. The sequence is that of GMP reductase from Lactobacillus gasseri (strain ATCC 33323 / DSM 20243 / BCRC 14619 / CIP 102991 / JCM 1131 / KCTC 3163 / NCIMB 11718 / NCTC 13722 / AM63).